We begin with the raw amino-acid sequence, 469 residues long: MNPNQKITTIGSICMVIGIVSLMLQIGNIISIWVSHSIQTGNQHQAEPCNQSIITYENNTWVNQTYVNISNTNFLTEKAVASVTLAGNSSLCPISGWAVYSKDNGIRIGSKGDVFVIREPFISCSHLECRTFFLTQGALLNDKHSNGTVKDRSPHRTLMSCPVGEAPSPYNSRFESVAWSASACHDGTSWLTIGISGPDNGAVAVLKYNGIITDTIKSWRNNIMRTQESECACVNGSCFTVMTDGPSNGQASYKIFRIEKGKVVKSAELNAPNYHYEECSCYPDAGEITCVCRDNWHGSNRPWVSFNQNLEYRIGYICSGVFGDNPRPNDGTGSCGPVSPKGAYGIKGFSFKYGNGVWIGRTKSTNSRSGFEMIWDPNGWTGTDSNFSVKQDIVAITDWSGYSGSFVQHPELTGLDCIRPCFWVELIRGRPKESTIWTSGSSISFCGVNSDTVGWSWPDGAELPFTIDK.

The Intravirion segment spans residues 1–12 (MNPNQKITTIGS). Positions 11 to 33 (GSICMVIGIVSLMLQIGNIISIW) are involved in apical transport and lipid raft association. A helical membrane pass occupies residues 13–33 (ICMVIGIVSLMLQIGNIISIW). At 34–469 (VSHSIQTGNQ…GAELPFTIDK (436 aa)) the chain is on the virion surface side. Residues 36–90 (HSIQTGNQHQAEPCNQSIITYENNTWVNQTYVNISNTNFLTEKAVASVTLAGNSS) are hypervariable stalk region. N-linked (GlcNAc...) asparagine; by host glycosylation is found at Asn-50, Asn-58, Asn-63, Asn-68, and Asn-88. The interval 91-469 (LCPISGWAVY…GAELPFTIDK (379 aa)) is head of neuraminidase. Disulfide bonds link Cys-92/Cys-417, Cys-124/Cys-129, Cys-184/Cys-231, Cys-233/Cys-238, Cys-279/Cys-292, Cys-281/Cys-290, Cys-318/Cys-335, and Cys-421/Cys-446. Residue Arg-118 coordinates substrate. Residue Asn-146 is glycosylated (N-linked (GlcNAc...) asparagine; by host). Catalysis depends on Asp-151, which acts as the Proton donor/acceptor. Position 152 (Arg-152) interacts with substrate. Asn-235 carries an N-linked (GlcNAc...) asparagine; by host glycan. Position 277-278 (277-278 (EE)) interacts with substrate. A substrate-binding site is contributed by Arg-293. The Ca(2+) site is built by Asp-294, Gly-298, and Asp-324. Residue Arg-368 coordinates substrate. A glycan (N-linked (GlcNAc...) asparagine; by host) is linked at Asn-386. The active-site Nucleophile is Tyr-402.

This sequence belongs to the glycosyl hydrolase 34 family. Homotetramer. Ca(2+) serves as cofactor. Post-translationally, N-glycosylated.

The protein localises to the virion membrane. It is found in the host apical cell membrane. It carries out the reaction Hydrolysis of alpha-(2-&gt;3)-, alpha-(2-&gt;6)-, alpha-(2-&gt;8)- glycosidic linkages of terminal sialic acid residues in oligosaccharides, glycoproteins, glycolipids, colominic acid and synthetic substrates.. Inhibited by the neuraminidase inhibitors zanamivir (Relenza) and oseltamivir (Tamiflu). These drugs interfere with the release of progeny virus from infected cells and are effective against all influenza strains. Resistance to neuraminidase inhibitors is quite rare. In terms of biological role, catalyzes the removal of terminal sialic acid residues from viral and cellular glycoconjugates. Cleaves off the terminal sialic acids on the glycosylated HA during virus budding to facilitate virus release. Additionally helps virus spread through the circulation by further removing sialic acids from the cell surface. These cleavages prevent self-aggregation and ensure the efficient spread of the progeny virus from cell to cell. Otherwise, infection would be limited to one round of replication. Described as a receptor-destroying enzyme because it cleaves a terminal sialic acid from the cellular receptors. May facilitate viral invasion of the upper airways by cleaving the sialic acid moieties on the mucin of the airway epithelial cells. Likely to plays a role in the budding process through its association with lipid rafts during intracellular transport. May additionally display a raft-association independent effect on budding. Plays a role in the determination of host range restriction on replication and virulence. Sialidase activity in late endosome/lysosome traffic seems to enhance virus replication. This Influenza A virus (strain A/Hong Kong/212/2003 H5N1 genotype Z+) protein is Neuraminidase.